A 63-amino-acid polypeptide reads, in one-letter code: Bowman-Birk type proteinase inhibitor B-II (63 aa).

7 disulfide bridges follow: Cys-5-Cys-62, Cys-6-Cys-23, Cys-9-Cys-57, Cys-11-Cys-21, Cys-30-Cys-37, Cys-34-Cys-49, and Cys-39-Cys-47.

This sequence belongs to the Bowman-Birk serine protease inhibitor family.

The sequence is that of Bowman-Birk type proteinase inhibitor B-II from Arachis hypogaea (Peanut).